The chain runs to 438 residues: GTPase Der (438 aa).

EngA-type G domains follow at residues 3–168 (PLIA…PCPE) and 179–354 (IKLA…INRR). Residues 9–16 (GRPNVGKS), 56–60 (DTGGY), 120–123 (NKVD), 185–192 (GRPNVGKS), 232–236 (DTAGL), and 297–300 (NKWD) contribute to the GTP site. One can recognise a KH-like domain in the interval 355 to 438 (QKISTSNLNR…LPITMRFLRK (84 aa)).

The protein belongs to the TRAFAC class TrmE-Era-EngA-EngB-Septin-like GTPase superfamily. EngA (Der) GTPase family. In terms of assembly, associates with the 50S ribosomal subunit.

Functionally, GTPase that plays an essential role in the late steps of ribosome biogenesis. In Chlorobaculum parvum (strain DSM 263 / NCIMB 8327) (Chlorobium vibrioforme subsp. thiosulfatophilum), this protein is GTPase Der.